Reading from the N-terminus, the 357-residue chain is Phenylalanine--tRNA ligase alpha subunit (357 aa).

E257 contacts Mg(2+).

It belongs to the class-II aminoacyl-tRNA synthetase family. Phe-tRNA synthetase alpha subunit type 1 subfamily. Tetramer of two alpha and two beta subunits. It depends on Mg(2+) as a cofactor.

The protein localises to the cytoplasm. It carries out the reaction tRNA(Phe) + L-phenylalanine + ATP = L-phenylalanyl-tRNA(Phe) + AMP + diphosphate + H(+). This is Phenylalanine--tRNA ligase alpha subunit from Ruegeria sp. (strain TM1040) (Silicibacter sp.).